The primary structure comprises 149 residues: UPF0178 protein VF_0601 (149 aa).

This sequence belongs to the UPF0178 family.

The chain is UPF0178 protein VF_0601 from Aliivibrio fischeri (strain ATCC 700601 / ES114) (Vibrio fischeri).